The sequence spans 316 residues: Transaldolase (316 aa).

Lys-125 acts as the Schiff-base intermediate with substrate in catalysis.

It belongs to the transaldolase family. Type 1 subfamily. In terms of assembly, homodimer.

The protein localises to the cytoplasm. The catalysed reaction is D-sedoheptulose 7-phosphate + D-glyceraldehyde 3-phosphate = D-erythrose 4-phosphate + beta-D-fructose 6-phosphate. Its pathway is carbohydrate degradation; pentose phosphate pathway; D-glyceraldehyde 3-phosphate and beta-D-fructose 6-phosphate from D-ribose 5-phosphate and D-xylulose 5-phosphate (non-oxidative stage): step 2/3. Functionally, transaldolase is important for the balance of metabolites in the pentose-phosphate pathway. This Acidovorax sp. (strain JS42) protein is Transaldolase.